Here is a 138-residue protein sequence, read N- to C-terminus: Phospholipase A2 homolog crotoxin acid subunit CA (138 aa).

An N-terminal signal peptide occupies residues 1–37; that stretch reads MRALWIVAVLLVGVEGSLVEFETLMMKIAGRSGISYY. 8 disulfide bridges follow: C42/C131, C44/C60, C59/C111, C65/C138, C66/C104, C73/C97, C91/C102, and C131/C138. The propeptide occupies 79 to 82; the sequence is VYTY. Q84 is modified (pyrrolidone carboxylic acid). Positions 119–124 are excised as a propeptide; sequence YDYKYL. The residue at position 125 (Q125) is a Pyrrolidone carboxylic acid.

Belongs to the phospholipase A2 family. Group II subfamily. D49 sub-subfamily. Heterodimer of one of the acidic (CA1, CA2, CA3 or CA4) and one of the basic (CBa1, CBa2, CBb, CBc or CBd) subunits; non-covalently linked. The acidic subunit is non-toxic, without enzymatic activity and comprises 3 peptides that are cross-linked by 5 disulfide bridges. The basic subunit is toxic, has phospholipase A2 activity and is composed of a single chain. Multiple variants of each subunit give different crotoxin complexes that can be subdivided into 2 classes: (1) those of high toxicity, low PLA2 activity (CBb, CBc and CBd linked with high affinity to any CA) and high stability (K(d)=4.5 nM) and (2) those of moderate toxicity, high PLA2 activity (CBa2 linked with low affinity to any CA) and low stability (K(d)=25 nM). As to expression, expressed by the venom gland.

It is found in the secreted. In terms of biological role, CAalpha-CAbeta-CAgamma: The acidic subunit of crotoxin (CA) is a heterotrimer of three disulfide-linked chains generated by post-translational maturation of a PLA2-like precursor. CA has no PLA2 activity and is not neurotoxic by itself, but plays several important functions in the crotoxin complex by increasing the lethal potency of the uncomplexed CB subunit. It acts by physically occluding the hydrophobic interfacial binding surface (IBS) of CB. This effect decreases the adsorption of CB to phospholipid membranes, targeting the crotoxin complex to reach the specific presynaptic receptor (R48) at the neuromuscular junction. It also prevents the formation of the reactive CB dimer. Moreover, the CA subunit inhibits the catalytic activity by partially masking the catalytic site of CB and inhibits its anticoagulant activity. Heterodimer CA-CB: Crotoxin is a potent presynaptic neurotoxin that possesses phospholipase A2 (PLA2) activity and exerts a lethal action by blocking neuromuscular transmission. It consists of a non-covalent association of a basic and weakly toxic PLA2 subunit (CBa2, CBb, CBc, or CBd), with a small acidic, non-enzymatic and non-toxic subunit (CA1, CA2, CA3 or CA4). The complex acts by binding to a specific 48-kDa protein (R48/CAPT) receptor located on presynaptic membranes, forming a transient ternary complex CA-CB-R48, followed by dissociation of the CA-CB complex and release of the CA subunit. At equilibrium, only the CB subunits remain associated with the specific crotoxin receptor. In addition to neurotoxicity, crotoxin has been found to exert myotoxicity, nephrotoxicity, and cardiovascular toxicity. Moreover, anti-inflammatory, immunomodulatory, anti-tumor and analgesic effects of crotoxin have also been reported. Its function is as follows. Found in the venom as a monomer and stabilized by one disulfide bond (Cys-131 and Cys-138). This peptide induces potent antinociceptive effects in acute and chronic pain models. This effect is mediated by the release of peripheral dynorphin A, an endogenous agonist of kappa-opioid receptors, and this release is dependent on cannabinoid receptor CB2 activation. The polypeptide is Phospholipase A2 homolog crotoxin acid subunit CA (Crotalus durissus terrificus (South American rattlesnake)).